We begin with the raw amino-acid sequence, 394 residues long: GTPase Obg (394 aa).

Residues 5 to 163 (SNFVDYVKIY…RMVIMQLKML (159 aa)) form the Obg domain. The interval 26 to 45 (HFRREKYIPKGGPDGGDGGR) is disordered. The region spanning 164 to 330 (ADVGLVGFPN…LKDTLWKELS (167 aa)) is the OBG-type G domain. GTP is bound by residues 170–177 (GFPNAGKS), 195–199 (FTTLE), 217–220 (DIPG), 284–287 (TKCD), and 311–313 (SAV). Residues Ser-177 and Thr-197 each contribute to the Mg(2+) site.

Belongs to the TRAFAC class OBG-HflX-like GTPase superfamily. OBG GTPase family. As to quaternary structure, monomer. The cofactor is Mg(2+).

The protein resides in the cytoplasm. An essential GTPase which binds GTP, GDP and possibly (p)ppGpp with moderate affinity, with high nucleotide exchange rates and a fairly low GTP hydrolysis rate. Plays a role in control of the cell cycle, stress response, ribosome biogenesis and in those bacteria that undergo differentiation, in morphogenesis control. This Porphyromonas gingivalis (strain ATCC 33277 / DSM 20709 / CIP 103683 / JCM 12257 / NCTC 11834 / 2561) protein is GTPase Obg.